We begin with the raw amino-acid sequence, 254 residues long: 4-hydroxy-tetrahydrodipicolinate reductase (254 aa).

Residues 10-15 (GATGKV) and 101-103 (GTT) each bind NAD(+). Histidine 157 functions as the Proton donor/acceptor in the catalytic mechanism. Histidine 158 contributes to the (S)-2,3,4,5-tetrahydrodipicolinate binding site. Residue lysine 161 is the Proton donor of the active site. Position 167 to 168 (167 to 168 (GT)) interacts with (S)-2,3,4,5-tetrahydrodipicolinate.

It belongs to the DapB family.

The protein localises to the cytoplasm. The enzyme catalyses (S)-2,3,4,5-tetrahydrodipicolinate + NAD(+) + H2O = (2S,4S)-4-hydroxy-2,3,4,5-tetrahydrodipicolinate + NADH + H(+). It catalyses the reaction (S)-2,3,4,5-tetrahydrodipicolinate + NADP(+) + H2O = (2S,4S)-4-hydroxy-2,3,4,5-tetrahydrodipicolinate + NADPH + H(+). Its pathway is amino-acid biosynthesis; L-lysine biosynthesis via DAP pathway; (S)-tetrahydrodipicolinate from L-aspartate: step 4/4. In terms of biological role, catalyzes the conversion of 4-hydroxy-tetrahydrodipicolinate (HTPA) to tetrahydrodipicolinate. The chain is 4-hydroxy-tetrahydrodipicolinate reductase from Symbiobacterium thermophilum (strain DSM 24528 / JCM 14929 / IAM 14863 / T).